The sequence spans 299 residues: Protein phosphatase 1 regulatory subunit 3D (299 aa).

The interval 1–22 is disordered; it reads MSRGPSSAVLPSALGSRKLGPR. Phosphoserine is present on residues S23, S25, and S28. The disordered stretch occupies residues 37–94; it reads EPRACRPPGSPGRAPPPTPAPSGCDPRLRPIILRRARSLPSSPERRQKAAGAPGAACR. Pro residues predominate over residues 44-56; that stretch reads PGSPGRAPPPTPA. A compositionally biased stretch (low complexity) spans 57–67; sequence PSGCDPRLRPI. At S74 the chain carries Phosphoserine. The segment covering 85 to 94 has biased composition (low complexity); the sequence is AAGAPGAACR. The short motif at 101-104 is the PP1-binding motif element; the sequence is LRVR. S133 carries the post-translational modification Phosphoserine. Residues 169 to 278 form the CBM21 domain; that stretch reads GERLQRQLVC…NNDHRDYSLT (110 aa).

In terms of assembly, interacts with PPP1CC catalytic subunit of PP1, and associates with glycogen. Interacts with EPM2A; in the presence of NHLC1/malin the interaction leads to PPP1R3D ubiquitination and autophagic degradation. In terms of tissue distribution, expressed in all tissues tested. High expression in skeletal muscle and heart.

In terms of biological role, seems to act as a glycogen-targeting subunit for PP1. PP1 is essential for cell division, and participates in the regulation of glycogen metabolism, muscle contractility and protein synthesis. The polypeptide is Protein phosphatase 1 regulatory subunit 3D (PPP1R3D) (Homo sapiens (Human)).